We begin with the raw amino-acid sequence, 284 residues long: Small ribosomal subunit protein uS2 (284 aa).

It belongs to the universal ribosomal protein uS2 family.

The sequence is that of Small ribosomal subunit protein uS2 (rpsB) from Mycoplasma genitalium (strain ATCC 33530 / DSM 19775 / NCTC 10195 / G37) (Mycoplasmoides genitalium).